Consider the following 286-residue polypeptide: MERCVRVKSWVEENRASFQPPVCNKLMHREQLKIMFVGGPNTRKDYHIEEGEEVFYQLEGDMVLRVLEQGEHRDVVIRQGEIFLLPARVPHSPQRFANTMGLVIERRRMETELDGLRYYVGDTEDVLFEKWFHCKDLGTQLAPIIQEFFHSEQYRTGKPNPDQLLKEPPFPLSTRSVMEPMSLKAWLESHSRELQAGTSLSLFGDSYETQVIAHGQGSSKGPRQDVDVWLWQLEGSSKVTMGGQCVALAPDDSLLVPAGFSYMWERAQGSVALSVTQDPACKKPLG.

Positions 1–160 are domain A (catalytic); the sequence is MERCVRVKSW…SEQYRTGKPN (160 aa). Arg43 is a binding site for O2. Fe cation contacts are provided by His47, Glu53, and His91. Substrate is bound at residue Glu53. Residues Arg95 and Glu105 each contribute to the substrate site. Residues 161 to 177 form a linker region; sequence PDQLLKEPPFPLSTRSV. Residues 178–286 are domain B; it reads MEPMSLKAWL…QDPACKKPLG (109 aa).

This sequence belongs to the 3-HAO family. In terms of assembly, monomer. It depends on Fe(2+) as a cofactor.

The protein localises to the cytoplasm. It is found in the cytosol. It carries out the reaction 3-hydroxyanthranilate + O2 = (2Z,4Z)-2-amino-3-carboxymuconate 6-semialdehyde. Its pathway is cofactor biosynthesis; NAD(+) biosynthesis; quinolinate from L-kynurenine: step 3/3. Catalyzes the oxidative ring opening of 3-hydroxyanthranilate to 2-amino-3-carboxymuconate semialdehyde, which spontaneously cyclizes to quinolinate. The sequence is that of 3-hydroxyanthranilate 3,4-dioxygenase (Haao) from Rattus norvegicus (Rat).